The sequence spans 79 residues: CDC42 small effector protein 1-A (79 aa).

2 S-palmitoyl cysteine lipidation sites follow: cysteine 10 and cysteine 11. The region spanning 30 to 43 (IGEPMNFVHLTHVG) is the CRIB domain.

The protein belongs to the CDC42SE/SPEC family.

It localises to the cytoplasm. The protein resides in the cytoskeleton. The protein localises to the cell membrane. In terms of biological role, probably involved in the organization of the actin cytoskeleton by acting downstream of CDC42, inducing actin filament assembly. This Xenopus laevis (African clawed frog) protein is CDC42 small effector protein 1-A (cdc42se1-a).